A 550-amino-acid polypeptide reads, in one-letter code: Transcriptional repressor RHIT (550 aa).

3 disordered regions span residues 1–67 (MSAD…ETRA), 174–200 (VQGKGEAPGSSRQLGHEEEEKRGVVEV), and 216–296 (KSFK…EGLA). Composition is skewed to basic and acidic residues over residues 11–22 (AQDKERARETPG), 45–58 (ESPHIKMEPEEPHP), and 187–200 (LGHEEEEKRGVVEV). The 70-residue stretch at 124–193 (VTFEDMALYL…SRQLGHEEEE (70 aa)) folds into the KRAB domain. Residue lysine 216 forms a Glycyl lysine isopeptide (Lys-Gly) (interchain with G-Cter in SUMO2) linkage. Residues 267–281 (DLPKTQEGHFPEQPR) are compositionally biased toward basic and acidic residues. At serine 290 the chain carries Phosphoserine. C2H2-type zinc fingers lie at residues 306–328 (YKCEQCGKAFSWHSHLVTHRRTH), 334–356 (YACTDCGKRFGRSSHLIQHQIIH), 362–384 (YTCPSCWKSFSHHSTLIQHQRIH), 390–412 (YVCDRCAKRFTRRSDLVTHQGTH), 418–440 (HKCPICGKCFTQSSALVTHQRTH), 446–468 (YPCPECGKCFSQRSNLIAHNRTH), 474–496 (YHCLDCGKSFSHSSHLTAHQRTH), and 502–524 (YSCPLCGKSFSRRSNLHRHEKIH).

Belongs to the krueppel C2H2-type zinc-finger protein family.

The protein localises to the nucleus. Its function is as follows. Transcriptional repressor involved in regulating MPV17L expression. By regulating MPV17L expression, contributes to the regulation of genes involved in H(2)O(2) metabolism and the mitochondrial apoptotic cascade. This chain is Transcriptional repressor RHIT (ZNF205), found in Bos taurus (Bovine).